The primary structure comprises 495 residues: Aspartyl/glutamyl-tRNA(Asn/Gln) amidotransferase subunit B (495 aa).

This sequence belongs to the GatB/GatE family. GatB subfamily. As to quaternary structure, heterotrimer of A, B and C subunits.

The catalysed reaction is L-glutamyl-tRNA(Gln) + L-glutamine + ATP + H2O = L-glutaminyl-tRNA(Gln) + L-glutamate + ADP + phosphate + H(+). It carries out the reaction L-aspartyl-tRNA(Asn) + L-glutamine + ATP + H2O = L-asparaginyl-tRNA(Asn) + L-glutamate + ADP + phosphate + 2 H(+). Functionally, allows the formation of correctly charged Asn-tRNA(Asn) or Gln-tRNA(Gln) through the transamidation of misacylated Asp-tRNA(Asn) or Glu-tRNA(Gln) in organisms which lack either or both of asparaginyl-tRNA or glutaminyl-tRNA synthetases. The reaction takes place in the presence of glutamine and ATP through an activated phospho-Asp-tRNA(Asn) or phospho-Glu-tRNA(Gln). The sequence is that of Aspartyl/glutamyl-tRNA(Asn/Gln) amidotransferase subunit B from Prochlorococcus marinus (strain MIT 9313).